A 275-amino-acid chain; its full sequence is MPELPEVETVARSLAPQLLSRTIVGLAKLDWPRMLTPPPPEFAALVAGRRIEAVGRRAKWLLLTLDAGWTLAIHLRMSGHLLVAEPAAADAPHVHFALDLDDGRRLIFDDQRKFGRVHLLDSTGLLALDAAHGPEPLTDDFTPAVLAERLRNRQAPIKALLLDQRLIAGIGNIYANEALWLAGIHPLTPGGTLTVDQIAALHHAIRLVLADAIANQGSSLRNYRDGYGRRGNYQEHFNVYDRVGKPCPRCQTAIERIVVAQRSTFFCPLCQVLVQ.

Residue Pro2 is the Schiff-base intermediate with DNA of the active site. Glu3 functions as the Proton donor in the catalytic mechanism. The active-site Proton donor; for beta-elimination activity is the Lys59. DNA is bound by residues His93, Arg112, and Arg153. Residues 238 to 272 form an FPG-type zinc finger; it reads NVYDRVGKPCPRCQTAIERIVVAQRSTFFCPLCQV. The active-site Proton donor; for delta-elimination activity is the Arg262.

This sequence belongs to the FPG family. As to quaternary structure, monomer. Zn(2+) is required as a cofactor.

It catalyses the reaction Hydrolysis of DNA containing ring-opened 7-methylguanine residues, releasing 2,6-diamino-4-hydroxy-5-(N-methyl)formamidopyrimidine.. The catalysed reaction is 2'-deoxyribonucleotide-(2'-deoxyribose 5'-phosphate)-2'-deoxyribonucleotide-DNA = a 3'-end 2'-deoxyribonucleotide-(2,3-dehydro-2,3-deoxyribose 5'-phosphate)-DNA + a 5'-end 5'-phospho-2'-deoxyribonucleoside-DNA + H(+). Its function is as follows. Involved in base excision repair of DNA damaged by oxidation or by mutagenic agents. Acts as a DNA glycosylase that recognizes and removes damaged bases. Has a preference for oxidized purines, such as 7,8-dihydro-8-oxoguanine (8-oxoG). Has AP (apurinic/apyrimidinic) lyase activity and introduces nicks in the DNA strand. Cleaves the DNA backbone by beta-delta elimination to generate a single-strand break at the site of the removed base with both 3'- and 5'-phosphates. This Chloroflexus aggregans (strain MD-66 / DSM 9485) protein is Formamidopyrimidine-DNA glycosylase.